The chain runs to 356 residues: Histidinol-phosphate aminotransferase 1 (356 aa).

Lys213 carries the N6-(pyridoxal phosphate)lysine modification.

This sequence belongs to the class-II pyridoxal-phosphate-dependent aminotransferase family. Histidinol-phosphate aminotransferase subfamily. Homodimer. Pyridoxal 5'-phosphate serves as cofactor.

It catalyses the reaction L-histidinol phosphate + 2-oxoglutarate = 3-(imidazol-4-yl)-2-oxopropyl phosphate + L-glutamate. Its pathway is amino-acid biosynthesis; L-histidine biosynthesis; L-histidine from 5-phospho-alpha-D-ribose 1-diphosphate: step 7/9. The sequence is that of Histidinol-phosphate aminotransferase 1 from Burkholderia pseudomallei (strain K96243).